Consider the following 43-residue polypeptide: Potassium channel toxin gamma-KTx 4.13 (43 aa).

Cystine bridges form between cysteine 5–cysteine 23, cysteine 11–cysteine 34, cysteine 20–cysteine 39, and cysteine 24–cysteine 41.

This sequence belongs to the ergtoxin family. Gamma-KTx 4 subfamily. In terms of tissue distribution, expressed by the venom gland.

It localises to the secreted. In terms of biological role, reversibly blocks Kv11/ERG potassium channels. This chain is Potassium channel toxin gamma-KTx 4.13, found in Centruroides noxius (Mexican scorpion).